The sequence spans 64 residues: Large ribosomal subunit protein uL1 (64 aa).

It belongs to the universal ribosomal protein uL1 family. Part of the 50S ribosomal subunit.

Its function is as follows. Binds directly to 23S rRNA. The L1 stalk is quite mobile in the ribosome, and is involved in E site tRNA release. In terms of biological role, protein L1 is also a translational repressor protein, it controls the translation of the L11 operon by binding to its mRNA. The chain is Large ribosomal subunit protein uL1 (rplA) from Streptomyces lavendulae.